Here is a 132-residue protein sequence, read N- to C-terminus: Putative esterase Ta0293 (132 aa).

The protein belongs to the thioesterase PaaI family.

The polypeptide is Putative esterase Ta0293 (Thermoplasma acidophilum (strain ATCC 25905 / DSM 1728 / JCM 9062 / NBRC 15155 / AMRC-C165)).